Here is a 281-residue protein sequence, read N- to C-terminus: uncharacterized protein (281 aa).

The disordered stretch occupies residues 1 to 30 (MVQIQFHQGEPLGHKKEKPPPVSPPSPPPI). Positions 20–30 (PPVSPPSPPPI) are enriched in pro residues. A run of 7 helical transmembrane segments spans residues 58–78 (TVVF…LIPW), 88–107 (TLPF…AYWL), 117–137 (MLVM…GLCF), 145–165 (AYVL…LMAW), 171–191 (LAIL…IAVQ), 196–216 (YQRI…IVLI), and 248–268 (VIMF…PNYA).

This sequence belongs to the cytomegalovirus US12 family.

Its subcellular location is the host membrane. This is an uncharacterized protein from Homo sapiens (Human).